A 226-amino-acid polypeptide reads, in one-letter code: Apoptosis regulator OPG045 (226 aa).

It belongs to the orthopoxvirus OPG045 family. Homodimer. Interacts with host pro-apoptotic protein BCL2L11 (via BH3 domain). Interacts with host NLRP1. Interacts with host BAK.

Its subcellular location is the host mitochondrion outer membrane. The protein resides in the host cytoplasm. Functionally, plays a role in evading host innate immune response by inhibiting host inflammasome activation. Interacts with and inhibits NLR-mediated interleukin-1 beta/IL1B production in infected cells. At the host mitochondria outer membrane, interacts with the BH3 domain of host BAK and prevents BAK from binding active BAX. In turn, host apoptosis is inhibited. The polypeptide is Apoptosis regulator OPG045 (OPG045) (Vaccinia virus (strain Copenhagen) (VACV)).